The sequence spans 325 residues: 8-oxo-dGDP phosphatase NUDT18 (325 aa).

Residues 38–163 enclose the Nudix hydrolase domain; that stretch reads NVCYIVGAVI…DILSLIDAGL (126 aa). Leu55 lines the Mg(2+) pocket. Residues 73 to 94 carry the Nudix box motif; that stretch reads GRMEECESILEALQREVREEAG.

Belongs to the Nudix hydrolase family. Requires Mn(2+) as cofactor. It depends on Mg(2+) as a cofactor.

It carries out the reaction 8-oxo-dGDP + H2O = 8-oxo-dGMP + phosphate + H(+). It catalyses the reaction 8-oxo-dADP + H2O = 8-oxo-dAMP + phosphate + H(+). The enzyme catalyses 2-oxo-dADP + H2O = 2-oxo-dAMP + phosphate + H(+). The catalysed reaction is 8-oxo-GDP + H2O = 8-oxo-GMP + phosphate + H(+). Mediates the hydrolysis of oxidized nucleoside diphosphate derivatives. Hydrolyzes 8-oxo-7,8-dihydroguanine (8-oxo-Gua)-containing deoxyribo- and ribonucleoside diphosphates to the monophosphates. Hydrolyzes 8-oxo-dGDP and 8-oxo-GDP with the same efficiencies. Also hydrolyzes 8-OH-dADP and 2-OH-dADP. Exhibited no or minimal hydrolysis activity against 8-oxo-dGTP, 8-oxo-GTP, dGTP, GTP, dGDP and GDP. Probably removes oxidized guanine nucleotides from both the DNA and RNA precursor pools. The chain is 8-oxo-dGDP phosphatase NUDT18 (nudt18) from Danio rerio (Zebrafish).